A 375-amino-acid chain; its full sequence is Baseplate protein gp16 (375 aa).

It belongs to the skunalikevirus baseplate protein gp16 family. As to quaternary structure, homotrimer.

Its subcellular location is the virion. Forms a dome thereby closing the central channel at the end of the baseplate. Changes its conformation upon activation by calcium allowing the channel to open at the bottom of the baseplate for DNA ejection. In Lactococcus lactis (Lactococcus lactis bacteriophage SK1), this protein is Baseplate protein gp16.